We begin with the raw amino-acid sequence, 251 residues long: 3-deoxy-manno-octulosonate cytidylyltransferase (251 aa).

The protein belongs to the KdsB family.

It localises to the cytoplasm. The catalysed reaction is 3-deoxy-alpha-D-manno-oct-2-ulosonate + CTP = CMP-3-deoxy-beta-D-manno-octulosonate + diphosphate. Its pathway is nucleotide-sugar biosynthesis; CMP-3-deoxy-D-manno-octulosonate biosynthesis; CMP-3-deoxy-D-manno-octulosonate from 3-deoxy-D-manno-octulosonate and CTP: step 1/1. The protein operates within bacterial outer membrane biogenesis; lipopolysaccharide biosynthesis. Activates KDO (a required 8-carbon sugar) for incorporation into bacterial lipopolysaccharide in Gram-negative bacteria. The polypeptide is 3-deoxy-manno-octulosonate cytidylyltransferase (Vibrio parahaemolyticus serotype O3:K6 (strain RIMD 2210633)).